The chain runs to 244 residues: 1-(5-phosphoribosyl)-5-[(5-phosphoribosylamino)methylideneamino] imidazole-4-carboxamide isomerase (244 aa).

The active-site Proton acceptor is the aspartate 11. The active-site Proton donor is aspartate 132.

The protein belongs to the HisA/HisF family.

The protein localises to the cytoplasm. The catalysed reaction is 1-(5-phospho-beta-D-ribosyl)-5-[(5-phospho-beta-D-ribosylamino)methylideneamino]imidazole-4-carboxamide = 5-[(5-phospho-1-deoxy-D-ribulos-1-ylimino)methylamino]-1-(5-phospho-beta-D-ribosyl)imidazole-4-carboxamide. Its pathway is amino-acid biosynthesis; L-histidine biosynthesis; L-histidine from 5-phospho-alpha-D-ribose 1-diphosphate: step 4/9. In Sphingopyxis alaskensis (strain DSM 13593 / LMG 18877 / RB2256) (Sphingomonas alaskensis), this protein is 1-(5-phosphoribosyl)-5-[(5-phosphoribosylamino)methylideneamino] imidazole-4-carboxamide isomerase.